Reading from the N-terminus, the 488-residue chain is MEKILMLNDDQIWIFKKHTNNIQLLIEVALYLKSNKSSVSKKDKDAMYDIFSESELYNPRESLRDKPLDTINHKLDGLSYFMFGYSDRINDENKFIFSPLGNLFLKYLHDKDKLSKIFSCMLISMQFPHPYSKPSECFLLYPFRLIFKLLLDKRLQGRLYHYEVYKIIIHTISIDEAKYEFLVKSILNSRKKSWNEKLNELSEIQHKVVKSVYEWQYYIVPLLGSLHIFKINNGDIEQKLYHPQKDGSKSPPTARKANNGYVEINDNLTNFIDKLLNKYSFLDTPILLSDSQRKSNDVTKEIYSFYPELLLAEIGETISFESHILNIPKLITEYSKNPDNSTSGKFEKILEEAFNLFIDVEAQWLAGAGRTDIECMYLPINEKFSIEAKSTKNKLSMINSGRLKRHRTLISANYTIVITPRYVPSVRYDIEAQDIVLITADTLAEYLYNNIISNNRDISYADIQAIIVANLGKDISTQISNLTLSKFG.

It catalyses the reaction Endonucleolytic cleavage of DNA to give specific double-stranded fragments with terminal 5'-phosphates.. Its function is as follows. An S subtype restriction enzyme that recognizes the double-stranded sequences 5'-GACGC-3' and 5'-GCGTC-3' and cleaves respectively 10 bases after G-1 and 10 bases before G'-1. The protein is Type II restriction enzyme HgaI (hgaIR) of Avibacterium volantium (Pasteurella volantium).